The following is a 320-amino-acid chain: 4-hydroxy-3-methylbut-2-enyl diphosphate reductase 2 (320 aa).

Residue cysteine 18 participates in [4Fe-4S] cluster binding. Histidine 47 and histidine 81 together coordinate (2E)-4-hydroxy-3-methylbut-2-enyl diphosphate. Dimethylallyl diphosphate-binding residues include histidine 47 and histidine 81. Isopentenyl diphosphate is bound by residues histidine 47 and histidine 81. A [4Fe-4S] cluster-binding site is contributed by cysteine 103. Residue histidine 131 participates in (2E)-4-hydroxy-3-methylbut-2-enyl diphosphate binding. Histidine 131 is a dimethylallyl diphosphate binding site. Histidine 131 contributes to the isopentenyl diphosphate binding site. Glutamate 133 (proton donor) is an active-site residue. (2E)-4-hydroxy-3-methylbut-2-enyl diphosphate is bound at residue threonine 172. Cysteine 202 is a binding site for [4Fe-4S] cluster. (2E)-4-hydroxy-3-methylbut-2-enyl diphosphate-binding residues include serine 230, serine 231, asparagine 232, and serine 275. Residues serine 230, serine 231, asparagine 232, and serine 275 each contribute to the dimethylallyl diphosphate site. Isopentenyl diphosphate-binding residues include serine 230, serine 231, asparagine 232, and serine 275.

It belongs to the IspH family. It depends on [4Fe-4S] cluster as a cofactor.

The enzyme catalyses isopentenyl diphosphate + 2 oxidized [2Fe-2S]-[ferredoxin] + H2O = (2E)-4-hydroxy-3-methylbut-2-enyl diphosphate + 2 reduced [2Fe-2S]-[ferredoxin] + 2 H(+). It carries out the reaction dimethylallyl diphosphate + 2 oxidized [2Fe-2S]-[ferredoxin] + H2O = (2E)-4-hydroxy-3-methylbut-2-enyl diphosphate + 2 reduced [2Fe-2S]-[ferredoxin] + 2 H(+). It participates in isoprenoid biosynthesis; dimethylallyl diphosphate biosynthesis; dimethylallyl diphosphate from (2E)-4-hydroxy-3-methylbutenyl diphosphate: step 1/1. Its pathway is isoprenoid biosynthesis; isopentenyl diphosphate biosynthesis via DXP pathway; isopentenyl diphosphate from 1-deoxy-D-xylulose 5-phosphate: step 6/6. In terms of biological role, catalyzes the conversion of 1-hydroxy-2-methyl-2-(E)-butenyl 4-diphosphate (HMBPP) into a mixture of isopentenyl diphosphate (IPP) and dimethylallyl diphosphate (DMAPP). Acts in the terminal step of the DOXP/MEP pathway for isoprenoid precursor biosynthesis. The chain is 4-hydroxy-3-methylbut-2-enyl diphosphate reductase 2 from Rhodopseudomonas palustris (strain ATCC BAA-98 / CGA009).